Reading from the N-terminus, the 427-residue chain is Adenylosuccinate synthetase (427 aa).

Residues 12–18 (GDEGKGK) and 40–42 (GHT) contribute to the GTP site. Residue aspartate 13 is the Proton acceptor of the active site. The Mg(2+) site is built by aspartate 13 and glycine 40. IMP contacts are provided by residues 13–16 (DEGK), 38–41 (NAGH), threonine 128, arginine 142, glutamine 223, threonine 238, and arginine 302. The active-site Proton donor is the histidine 41. 298–304 (TTTGRPR) serves as a coordination point for substrate. GTP is bound by residues arginine 304, 330–332 (SID), and 412–414 (SVG).

Belongs to the adenylosuccinate synthetase family. In terms of assembly, homodimer. It depends on Mg(2+) as a cofactor.

Its subcellular location is the cytoplasm. It catalyses the reaction IMP + L-aspartate + GTP = N(6)-(1,2-dicarboxyethyl)-AMP + GDP + phosphate + 2 H(+). The protein operates within purine metabolism; AMP biosynthesis via de novo pathway; AMP from IMP: step 1/2. Plays an important role in the de novo pathway of purine nucleotide biosynthesis. Catalyzes the first committed step in the biosynthesis of AMP from IMP. The polypeptide is Adenylosuccinate synthetase (Staphylococcus epidermidis (strain ATCC 12228 / FDA PCI 1200)).